A 214-amino-acid polypeptide reads, in one-letter code: Large ribosomal subunit protein uL3 (214 aa).

The segment at G131–P155 is disordered. N5-methylglutamine is present on Q153.

Belongs to the universal ribosomal protein uL3 family. Part of the 50S ribosomal subunit. Forms a cluster with proteins L14 and L19. Post-translationally, methylated by PrmB.

Functionally, one of the primary rRNA binding proteins, it binds directly near the 3'-end of the 23S rRNA, where it nucleates assembly of the 50S subunit. The chain is Large ribosomal subunit protein uL3 from Neisseria gonorrhoeae (strain ATCC 700825 / FA 1090).